The following is an 841-amino-acid chain: Translation initiation factor IF-2 (841 aa).

The segment at 87 to 254 (RKKKVFVQRS…KRNAHGFQSP (168 aa)) is disordered. Basic and acidic residues predominate over residues 96–135 (SPEEIEAERKREMDERRAVENAARQKAEEEAKRRAEEDAR). Positions 136–175 (SQPAASQSAPAAAEPVAAAEPVREAAPAAAPAPASAAPSA) are enriched in low complexity. Composition is skewed to basic and acidic residues over residues 176–217 (DARK…EKAP) and 225–234 (TTDEESDSFR). Over residues 235 to 248 (RGGRGKGKLKKRNA) the composition is skewed to basic residues. Residues 341 to 510 (SRAPVVTVMG…LLQAEVLELK (170 aa)) enclose the tr-type G domain. Positions 350–357 (GHVDHGKT) are G1. Position 350–357 (350–357 (GHVDHGKT)) interacts with GTP. The G2 stretch occupies residues 375-379 (GITQH). Positions 396–399 (DTPG) are G3. Residues 396 to 400 (DTPGH) and 450 to 453 (NKID) each bind GTP. Residues 450 to 453 (NKID) form a G4 region. The G5 stretch occupies residues 486–488 (SAK).

Belongs to the TRAFAC class translation factor GTPase superfamily. Classic translation factor GTPase family. IF-2 subfamily.

It is found in the cytoplasm. In terms of biological role, one of the essential components for the initiation of protein synthesis. Protects formylmethionyl-tRNA from spontaneous hydrolysis and promotes its binding to the 30S ribosomal subunits. Also involved in the hydrolysis of GTP during the formation of the 70S ribosomal complex. The protein is Translation initiation factor IF-2 of Pseudomonas syringae pv. syringae (strain B728a).